Consider the following 291-residue polypeptide: POU class 2 homeobox associating-factor 2 (291 aa).

The 23-residue stretch at 7–29 folds into the OCA domain; it reads KRVYQGVRVKHTVKDLLAEKRLR. A disordered region spans residues 176 to 219; the sequence is AAPVADSPSLAGPDSGSSSPYRLTSGRSGSSIPSSSQPYTLQPL. Low complexity predominate over residues 200–211; it reads SGRSGSSIPSSS.

It belongs to the POU2AF family.

In terms of biological role, transcriptional coactivator that may regulate cell type-specific differentiation pathways. The sequence is that of POU class 2 homeobox associating-factor 2 (pou2af2) from Danio rerio (Zebrafish).